The chain runs to 307 residues: Glycine--tRNA ligase alpha subunit (307 aa).

Belongs to the class-II aminoacyl-tRNA synthetase family. As to quaternary structure, tetramer of two alpha and two beta subunits.

It localises to the cytoplasm. It catalyses the reaction tRNA(Gly) + glycine + ATP = glycyl-tRNA(Gly) + AMP + diphosphate. The sequence is that of Glycine--tRNA ligase alpha subunit from Aeromonas hydrophila subsp. hydrophila (strain ATCC 7966 / DSM 30187 / BCRC 13018 / CCUG 14551 / JCM 1027 / KCTC 2358 / NCIMB 9240 / NCTC 8049).